Consider the following 138-residue polypeptide: Phosphoribosyl-AMP cyclohydrolase (138 aa).

Asp86 provides a ligand contact to Mg(2+). Cys87 is a binding site for Zn(2+). Mg(2+) contacts are provided by Asp88 and Asp90. Zn(2+) contacts are provided by Cys104 and Cys111.

This sequence belongs to the PRA-CH family. As to quaternary structure, homodimer. Requires Mg(2+) as cofactor. It depends on Zn(2+) as a cofactor.

Its subcellular location is the cytoplasm. The enzyme catalyses 1-(5-phospho-beta-D-ribosyl)-5'-AMP + H2O = 1-(5-phospho-beta-D-ribosyl)-5-[(5-phospho-beta-D-ribosylamino)methylideneamino]imidazole-4-carboxamide. It participates in amino-acid biosynthesis; L-histidine biosynthesis; L-histidine from 5-phospho-alpha-D-ribose 1-diphosphate: step 3/9. Its function is as follows. Catalyzes the hydrolysis of the adenine ring of phosphoribosyl-AMP. This Marinobacter nauticus (strain ATCC 700491 / DSM 11845 / VT8) (Marinobacter aquaeolei) protein is Phosphoribosyl-AMP cyclohydrolase.